Here is a 200-residue protein sequence, read N- to C-terminus: MHSTPIQDALVPMVIEQTSRGERSFDIYSRLLKERVIFLVGQVEDHMANLIVAQLLFLESENPDKDIHLYINSPGGSVTAGMAIYDTMRFIKPDVSTMCIGQAASMGSFLLSAGAEGKRYALPNSRVMIHQPLGGFQGQASDIEIHAKEIIQIKQKLNKALADHTGQPIEVIENDTDRDNFMSADEACDYGLVDKVLTRR.

The active-site Nucleophile is the Ser-105. Residue His-130 is part of the active site.

It belongs to the peptidase S14 family. In terms of assembly, fourteen ClpP subunits assemble into 2 heptameric rings which stack back to back to give a disk-like structure with a central cavity, resembling the structure of eukaryotic proteasomes.

It localises to the cytoplasm. The catalysed reaction is Hydrolysis of proteins to small peptides in the presence of ATP and magnesium. alpha-casein is the usual test substrate. In the absence of ATP, only oligopeptides shorter than five residues are hydrolyzed (such as succinyl-Leu-Tyr-|-NHMec, and Leu-Tyr-Leu-|-Tyr-Trp, in which cleavage of the -Tyr-|-Leu- and -Tyr-|-Trp bonds also occurs).. In terms of biological role, cleaves peptides in various proteins in a process that requires ATP hydrolysis. Has a chymotrypsin-like activity. Plays a major role in the degradation of misfolded proteins. The protein is ATP-dependent Clp protease proteolytic subunit of Hydrogenovibrio crunogenus (strain DSM 25203 / XCL-2) (Thiomicrospira crunogena).